We begin with the raw amino-acid sequence, 50 residues long: MAQKKASLACADCGNRNYSISVSSTPKPTRLEVNKFCKNCKKYTLHKETR.

Belongs to the bacterial ribosomal protein bL33 family.

This is Large ribosomal subunit protein bL33A from Streptococcus thermophilus (strain CNRZ 1066).